We begin with the raw amino-acid sequence, 337 residues long: Bifunctional methylenetetrahydrofolate dehydrogenase/cyclohydrolase, mitochondrial (337 aa).

The transit peptide at 1 to 30 (MATALCPLRALGQTAFRPRTRRLHLSAPRA) directs the protein to the mitochondrion. Substrate is bound by residues 79 to 83 (YVLNK) and 126 to 128 (VQL). NAD(+) contacts are provided by residues 195 to 197 (GRS) and arginine 228. Position 304-308 (304-308 (PGGVG)) interacts with substrate.

Belongs to the tetrahydrofolate dehydrogenase/cyclohydrolase family. Mg(2+) is required as a cofactor.

Its subcellular location is the mitochondrion. It catalyses the reaction (6R)-5,10-methylene-5,6,7,8-tetrahydrofolate + NAD(+) = (6R)-5,10-methenyltetrahydrofolate + NADH. It carries out the reaction (6R)-5,10-methenyltetrahydrofolate + H2O = (6R)-10-formyltetrahydrofolate + H(+). Its function is as follows. Although its dehydrogenase activity is NAD-specific, it can also utilize NADP at a reduced efficiency. The polypeptide is Bifunctional methylenetetrahydrofolate dehydrogenase/cyclohydrolase, mitochondrial (MTHFD2) (Gallus gallus (Chicken)).